The sequence spans 753 residues: 5-methyltetrahydropteroyltriglutamate--homocysteine methyltransferase (753 aa).

Residues 17–20 (RELK) and K117 each bind 5-methyltetrahydropteroyltri-L-glutamate. Residues 431–433 (IGS) and E484 each bind L-homocysteine. L-methionine is bound by residues 431-433 (IGS) and E484. 5-methyltetrahydropteroyltri-L-glutamate is bound by residues 515–516 (RC) and W561. Residue D599 participates in L-homocysteine binding. D599 lines the L-methionine pocket. Residue E605 coordinates 5-methyltetrahydropteroyltri-L-glutamate. Zn(2+)-binding residues include H641, C643, and E665. The active-site Proton donor is the H694. Residue C726 participates in Zn(2+) binding.

The protein belongs to the vitamin-B12 independent methionine synthase family. The cofactor is Zn(2+).

The catalysed reaction is 5-methyltetrahydropteroyltri-L-glutamate + L-homocysteine = tetrahydropteroyltri-L-glutamate + L-methionine. Its pathway is amino-acid biosynthesis; L-methionine biosynthesis via de novo pathway; L-methionine from L-homocysteine (MetE route): step 1/1. Its function is as follows. Catalyzes the transfer of a methyl group from 5-methyltetrahydrofolate to homocysteine resulting in methionine formation. The sequence is that of 5-methyltetrahydropteroyltriglutamate--homocysteine methyltransferase from Escherichia coli O1:K1 / APEC.